The sequence spans 362 residues: Dihydroorotate dehydrogenase (quinone) (362 aa).

FMN contacts are provided by residues 62–66 and Thr86; that span reads AGYDK. Lys66 lines the substrate pocket. 111-115 serves as a coordination point for substrate; that stretch reads NRLGF. Residues Asn139 and Asn170 each coordinate FMN. Asn170 lines the substrate pocket. Residue Ser173 is the Nucleophile of the active site. Substrate is bound at residue Asn175. Lys215 and Ser243 together coordinate FMN. 244–245 is a binding site for substrate; sequence NT. FMN-binding positions include Gly266, Gly295, and 316–317; that span reads YS.

This sequence belongs to the dihydroorotate dehydrogenase family. Type 2 subfamily. Monomer. Requires FMN as cofactor.

It is found in the cell membrane. It catalyses the reaction (S)-dihydroorotate + a quinone = orotate + a quinol. Its pathway is pyrimidine metabolism; UMP biosynthesis via de novo pathway; orotate from (S)-dihydroorotate (quinone route): step 1/1. Functionally, catalyzes the conversion of dihydroorotate to orotate with quinone as electron acceptor. The chain is Dihydroorotate dehydrogenase (quinone) from Sinorhizobium fredii (strain NBRC 101917 / NGR234).